A 269-amino-acid polypeptide reads, in one-letter code: Putative ankyrin repeat protein L23 (269 aa).

5 ANK repeats span residues 118 to 147 (EDDY…DIKS), 148 to 177 (DGDY…DIRA), 179 to 207 (NDYA…NIRE), 208 to 237 (QNDY…DIRA), and 238 to 267 (DNDC…DIRA).

This chain is Putative ankyrin repeat protein L23, found in Acanthamoeba polyphaga (Amoeba).